A 2151-amino-acid chain; its full sequence is RNA-directed RNA polymerase L (2151 aa).

Residues His-36, Glu-54, Asp-97, Glu-110, and Val-111 each coordinate Mn(2+). The active-site For endonuclease activity is the Lys-124. A RdRp catalytic domain is found at 956–1142 (NGKFIRMKRK…SVNTEMWKSM (187 aa)). Residue Asp-1099 coordinates Mg(2+).

This sequence belongs to the Bunyavirales RNA polymerase family. In terms of assembly, interacts with the viral nucleoprotein. Mn(2+) serves as cofactor. Requires Mg(2+) as cofactor.

It localises to the host cytoplasm. Its subcellular location is the host perinuclear region. The catalysed reaction is RNA(n) + a ribonucleoside 5'-triphosphate = RNA(n+1) + diphosphate. RNA-dependent RNA polymerase, which is responsible for the replication and transcription of the viral RNA genome using antigenomic RNA as an intermediate. During transcription, synthesizes subgenomic RNAs and assures their capping by a cap-snatching mechanism, which involves the endonuclease activity cleaving the host capped pre-mRNAs. These short capped RNAs are then used as primers for viral transcription. Cleaves ssRNA substrates but not DNA. Seems to downregulate the expression of its own and heterologous mRNAs through its endonuclease activity. In Apodemus agrarius (Eurasian field mouse), this protein is RNA-directed RNA polymerase L.